Consider the following 258-residue polypeptide: Ribosomal RNA large subunit methyltransferase E (258 aa).

Positions 58, 60, 78, 96, and 120 each coordinate S-adenosyl-L-methionine. Catalysis depends on lysine 160, which acts as the Proton acceptor.

The protein belongs to the class I-like SAM-binding methyltransferase superfamily. RNA methyltransferase RlmE family.

Its subcellular location is the cytoplasm. It carries out the reaction uridine(2552) in 23S rRNA + S-adenosyl-L-methionine = 2'-O-methyluridine(2552) in 23S rRNA + S-adenosyl-L-homocysteine + H(+). Functionally, specifically methylates the uridine in position 2552 of 23S rRNA at the 2'-O position of the ribose in the fully assembled 50S ribosomal subunit. This chain is Ribosomal RNA large subunit methyltransferase E, found in Methanococcus maripaludis (strain C5 / ATCC BAA-1333).